A 1496-amino-acid chain; its full sequence is Synaptojanin-2 (1496 aa).

The region spanning 120-444 is the SAC domain; that stretch reads LKKILSSGVF…GHSLSKVFTG (325 aa). In terms of domain architecture, RRM spans 889-968; it reads DATVVVNLQS…RAVKIRPKTK (80 aa). Disordered stretches follow at residues 1027 to 1073, 1085 to 1166, 1190 to 1405, and 1427 to 1473; these read NQPG…DDAD, GEFR…YNVK, ASEE…PEAA, and NTWL…KTLG. The segment covering 1101–1115 has biased composition (pro residues); sequence RPRPPQPPQRPPPPT. Phosphoserine occurs at positions 1124 and 1191. Positions 1124–1140 are enriched in polar residues; it reads SDASISSGTHGQYSILQ. Pro residues-rich tracts occupy residues 1221-1235 and 1319-1332; these read PQAP…PPRV and VPPP…VPKV. A compositionally biased stretch (low complexity) spans 1340-1359; sequence APAAFHLQVLQSNSQLLQGL. 2 stretches are compositionally biased toward polar residues: residues 1383–1394 and 1427–1442; these read FLSTSSATSPDS and NTWL…SGTR.

This sequence belongs to the synaptojanin family. The protein in the central section; belongs to the inositol 1,4,5-trisphosphate 5-phosphatase family. Binds to GRB2. Isoform 2A binds to SYNJ2BP/OMP25. Isoform 2B2 C-terminal proline-rich region binds to a variety of SH3 domain-containing proteins including SH3GL1, SH3GL2, SH3GL3 and GRB2.

It localises to the cytoplasm. Its subcellular location is the cell membrane. The protein localises to the membrane raft. It is found in the presynapse. The protein resides in the cytoskeleton. It carries out the reaction a 1,2-diacyl-sn-glycero-3-phospho-(1D-myo-inositol-4,5-bisphosphate) + H2O = a 1,2-diacyl-sn-glycero-3-phospho-(1D-myo-inositol 4-phosphate) + phosphate. Its function is as follows. Inositol 5-phosphatase which may be involved in distinct membrane trafficking and signal transduction pathways. May mediate the inhibitory effect of Rac1 on endocytosis. The protein is Synaptojanin-2 (SYNJ2) of Homo sapiens (Human).